The chain runs to 360 residues: Cell division protein DivIB (360 aa).

Residues 1–54 (MTEKDSNVEESVLEVEQASQVELDSEQISPAEKESVLAEEKEFSTDVDIPEMTA) form a disordered region. Over 1-139 (MTEKDSNVEE…VDIPSKVVWK (139 aa)) the chain is Cytoplasmic. The segment covering 17–28 (QASQVELDSEQI) has biased composition (polar residues). A compositionally biased stretch (basic and acidic residues) spans 31–44 (AEKESVLAEEKEFS). A helical transmembrane segment spans residues 140-160 (AIPVLVTSLLLAALALYFISP). Over 161 to 360 (TSKKKQIEVV…MEVGIYRYAS (200 aa)) the chain is Extracellular. In terms of domain architecture, POTRA spans 162-233 (SKKKQIEVVG…ATFTIHIKEY (72 aa)).

The protein belongs to the FtsQ/DivIB family. DivIB subfamily.

Its subcellular location is the cell membrane. Its function is as follows. Cell division protein that may be involved in stabilizing or promoting the assembly of the division complex. The chain is Cell division protein DivIB from Streptococcus suis (strain GZ1).